Consider the following 553-residue polypeptide: Neutral amino acid transporter B(0) (553 aa).

An N-acetylmethionine modification is found at methionine 1. Residues 1-50 lie on the Cytoplasmic side of the membrane; it reads MAVDPPKADPKGVAVDSSRRCPALGSREDQSAKAGGCCGSRDRVRRCIRA. The chain crosses the membrane as a helical span at residues 51–80; that stretch reads NLLVLLTVAAVVAGVGLGLGVSAAGGADAL. At 81 to 93 the chain is on the extracellular side; that stretch reads GPARLTRFAFPGE. Residues 94-115 form a helical membrane-spanning segment; it reads LLLRLLKMIILPLVVCSLIGGA. The Cytoplasmic segment spans residues 116-129; the sequence is ASLDPSALGRVGAW. The chain crosses the membrane as a helical span at residues 130–152; that stretch reads ALLFFLVTTLLASALGVGLALAL. The Extracellular segment spans residues 153–236; it reads KPGAAVTAIT…INSTMVQLLC (84 aa). Residues asparagine 165 and asparagine 228 are each glycosylated (N-linked (GlcNAc...) asparagine). A helical membrane pass occupies residues 237–260; it reads EVEGMNILGLVVFAIVFGVALRKL. The Cytoplasmic portion of the chain corresponds to 261 to 269; the sequence is GPEGELLIR. A helical membrane pass occupies residues 270–297; it reads FFNSFNDATMVLVSWIMWYAPVGILFLV. Residues 298–318 are Extracellular-facing; sequence ASKIVEMKDVRQLFISLGKYI. Residues 319-340 form a helical membrane-spanning segment; it reads LCCLLGHAIHGLLVLPLIYFLF. Residues 341-345 are Cytoplasmic-facing; the sequence is TRKNP. An intramembrane region (discontinuously helical) is located at residues 346–376; sequence YRFLWGIMTPLATAFGTSSSSATLPLMMKCV. The Cytoplasmic segment spans residues 377–385; that stretch reads EEKNGVAKH. The helical transmembrane segment at 386-412 threads the bilayer; sequence ISRFILPIGATVNMDGAALFQCVAAVF. Glycine 394, threonine 396, and asparagine 398 together coordinate Na(+). Residues 413–425 lie on the Extracellular side of the membrane; sequence IAQLNGVSLDFVK. Positions 426–459 form an intramembrane region, discontinuously helical; the sequence is IITILVTATASSVGAAGIPAGGVLTLAIILEAVS. Residues 460–472 lie on the Extracellular side of the membrane; it reads LPVKDISLILAVD. The chain crosses the membrane as a helical span at residues 473–494; it reads WLVDRSCTVLNVEGDAFGAGLL. The Na(+) site is built by asparagine 483 and aspartate 487. At 495 to 553 the chain is on the cytoplasmic side; that stretch reads QSYVDRTKMPSSEPELIQVKNEVSLNPLPLATEEGNPLLKQYQGPTGDSSATFEKESVM. 5 positions are modified to phosphoserine: serine 505, serine 506, serine 518, serine 543, and serine 551. Residues 531–553 form a disordered region; the sequence is PLLKQYQGPTGDSSATFEKESVM. Residues 537–546 show a composition bias toward polar residues; it reads QGPTGDSSAT.

The protein belongs to the dicarboxylate/amino acid:cation symporter (DAACS) (TC 2.A.23) family. SLC1A5 subfamily. As to quaternary structure, homotrimer. Highly expressed in adipose tissue. Detected in lung, skeletal muscle, large intestine, kidney and testis. Expressed in lung, brain, kidney and neural retina (at protein level). Expressed in Mueller cells (at protein level).

The protein localises to the cell membrane. The protein resides in the melanosome. The enzyme catalyses L-glutamine(out) + L-serine(in) + Na(+)(out) = L-glutamine(in) + L-serine(out) + Na(+)(in). It carries out the reaction L-glutamine(in) + L-serine(out) + Na(+)(out) = L-glutamine(out) + L-serine(in) + Na(+)(in). It catalyses the reaction L-threonine(in) + L-glutamine(out) + Na(+)(out) = L-threonine(out) + L-glutamine(in) + Na(+)(in). The catalysed reaction is L-threonine(out) + L-glutamine(in) + Na(+)(out) = L-threonine(in) + L-glutamine(out) + Na(+)(in). The enzyme catalyses L-asparagine(in) + L-glutamine(out) + Na(+)(out) = L-asparagine(out) + L-glutamine(in) + Na(+)(in). It carries out the reaction L-asparagine(out) + L-glutamine(in) + Na(+)(out) = L-asparagine(in) + L-glutamine(out) + Na(+)(in). It catalyses the reaction L-glutamine(in) + L-alanine(out) + Na(+)(out) = L-glutamine(out) + L-alanine(in) + Na(+)(in). The catalysed reaction is L-valine(out) + L-glutamine(in) + Na(+)(out) = L-valine(in) + L-glutamine(out) + Na(+)(in). The enzyme catalyses L-glutamine(in) + L-methionine(out) + Na(+)(out) = L-glutamine(out) + L-methionine(in) + Na(+)(in). It carries out the reaction L-glutamine(in) + L-glutamate(out) + Na(+)(out) + H(+)(out) = L-glutamine(out) + L-glutamate(in) + Na(+)(in) + H(+)(in). It catalyses the reaction D-serine(in) + L-glutamine(out) + Na(+)(out) = D-serine(out) + L-glutamine(in) + Na(+)(in). The catalysed reaction is D-serine(in) + L-alanine(out) + Na(+)(out) = D-serine(out) + L-alanine(in) + Na(+)(in). The enzyme catalyses nitrate(in) = nitrate(out). It carries out the reaction iodide(out) = iodide(in). It catalyses the reaction thiocyanate(in) = thiocyanate(out). With respect to regulation, down-regulated at acidic pH, with the exception of L-glutamate transport which is up-regulated instead. In terms of biological role, sodium-coupled antiporter of neutral amino acids. In a tri-substrate transport cycle, exchanges neutral amino acids between the extracellular and intracellular compartments, coupled to the inward cotransport of at least one sodium ion. The preferred substrate is the essential amino acid L-glutamine, a precursor for biosynthesis of proteins, nucleotides and amine sugars as well as an alternative fuel for mitochondrial oxidative phosphorylation. Exchanges L-glutamine with other neutral amino acids such as L-serine, L-threonine and L-asparagine in a bidirectional way. Provides L-glutamine to proliferating stem and activated cells driving the metabolic switch toward cell differentiation. The transport cycle is usually pH-independent, with the exception of L-glutamate. Transports extracellular L-glutamate coupled to the cotransport of one proton and one sodium ion in exchange for intracellular L-glutamine counter-ion. May provide for L-glutamate uptake in glial cells regulating glutamine/glutamate cycle in the nervous system. Can transport D-amino acids. Mediates D-serine release from the retinal glia potentially affecting NMDA receptor function in retinal neurons. Displays sodium- and amino acid-dependent but uncoupled channel-like anion conductance with a preference SCN(-) &gt;&gt; NO3(-) &gt; I(-) &gt; Cl(-). Through binding of the fusogenic protein syncytin-1/ERVW-1 may mediate trophoblasts syncytialization, the spontaneous fusion of their plasma membranes, an essential process in placental development. In Mus musculus (Mouse), this protein is Neutral amino acid transporter B(0) (Slc1a5).